A 355-amino-acid polypeptide reads, in one-letter code: Protein RecA (355 aa).

66 to 73 lines the ATP pocket; it reads GPESSGKT. The disordered stretch occupies residues 331-355; that stretch reads DVPEEDLPTTEDEQINILPDDSTEE. The segment covering 332–344 has biased composition (acidic residues); sequence VPEEDLPTTEDEQ.

It belongs to the RecA family.

It is found in the cytoplasm. Can catalyze the hydrolysis of ATP in the presence of single-stranded DNA, the ATP-dependent uptake of single-stranded DNA by duplex DNA, and the ATP-dependent hybridization of homologous single-stranded DNAs. It interacts with LexA causing its activation and leading to its autocatalytic cleavage. The sequence is that of Protein RecA from Latilactobacillus sakei subsp. sakei (strain 23K) (Lactobacillus sakei subsp. sakei).